The following is a 509-amino-acid chain: Zinc metalloproteinase aureolysin (509 aa).

Positions 1 to 27 are cleaved as a signal peptide; it reads MRKFSRYAFTSMATVTLLSSLTPAALA. A propeptide spanning residues 28–208 is cleaved from the precursor; that stretch reads SDTNHKPATS…VVEKTNLVKE (181 aa). D348 is a binding site for Ca(2+). H352 serves as a coordination point for Zn(2+). E353 is a catalytic residue. 2 residues coordinate Zn(2+): H356 and E376. D387, E389, D390, L392, E395, Y398, T399, K402, and D405 together coordinate Ca(2+). Catalysis depends on H436, which acts as the Proton donor.

The protein belongs to the peptidase M4 family. As to quaternary structure, monomer. It depends on Ca(2+) as a cofactor. Zn(2+) serves as cofactor.

It carries out the reaction Cleavage of insulin B chain with specificity similar to that of thermolysin, preferring hydrophobic P1' residues. Activates the glutamyl endopeptidase (EC 3.4.21.19) of Staphylococcus aureus.. Plays an essential role in immune evasion by helping bacteria to resist complement-mediated killing by neutrophils. Inhibits the deposition of host C3b on bacterial surfaces and the release of the chemoattractant C5a by cleaving the central complement protein C3. The cleavage site renders the C3b molecule vulnerable to proteolytic degradation by host regulators. Cleaves and inactivates host SERPINA1, which is an endogenous protease inhibitor essential for controlling neutrophil serine protease elastase. Also plays an essential role in the cleavage and subsequent activation of the serine protease SspA (glutamyl endopeptidase) which is involved in colonization and infection of human tissues. This is Zinc metalloproteinase aureolysin from Staphylococcus aureus.